The following is a 310-amino-acid chain: ATP phosphoribosyltransferase (310 aa).

This sequence belongs to the ATP phosphoribosyltransferase family.

Its subcellular location is the cytoplasm. It catalyses the reaction 1-(5-phospho-beta-D-ribosyl)-ATP + diphosphate = 5-phospho-alpha-D-ribose 1-diphosphate + ATP. It participates in amino-acid biosynthesis; L-histidine biosynthesis; L-histidine from 5-phospho-alpha-D-ribose 1-diphosphate: step 1/9. Its function is as follows. Catalyzes the condensation of ATP and 5-phosphoribose 1-diphosphate to form N'-(5'-phosphoribosyl)-ATP (PR-ATP). Has a crucial role in the pathway because the rate of histidine biosynthesis seems to be controlled primarily by regulation of HisG enzymatic activity. In Schizosaccharomyces pombe (strain 972 / ATCC 24843) (Fission yeast), this protein is ATP phosphoribosyltransferase (his1).